The primary structure comprises 145 residues: Small ribosomal subunit protein uS17c (145 aa).

A chloroplast-targeting transit peptide spans 1–36 (MLLTTPFVSSPVRVQGNGGSGASPWAGAATALRIQA). Residues 101-145 (KTKHFLAVPLPPRDTRRKSQLLPPLQSQSQSQDQDQPPTPPPSSD) are disordered. Low complexity predominate over residues 120 to 136 (QLLPPLQSQSQSQDQDQ).

Belongs to the universal ribosomal protein uS17 family. As to quaternary structure, part of the 30S ribosomal subunit.

Its subcellular location is the plastid. The protein resides in the chloroplast. Functionally, one of the primary rRNA binding proteins, it binds specifically to the 5'-end of 16S ribosomal RNA. In Oryza sativa subsp. japonica (Rice), this protein is Small ribosomal subunit protein uS17c (RPS17).